Here is a 102-residue protein sequence, read N- to C-terminus: Citrate lyase acyl carrier protein (102 aa).

O-(phosphoribosyl dephospho-coenzyme A)serine is present on serine 14.

This sequence belongs to the CitD family. In terms of assembly, oligomer with a subunit composition of (alpha,beta,gamma)6.

The protein resides in the cytoplasm. Its function is as follows. Covalent carrier of the coenzyme of citrate lyase. This Streptococcus mutans serotype c (strain ATCC 700610 / UA159) protein is Citrate lyase acyl carrier protein.